The primary structure comprises 786 residues: Probable aminopeptidase 1 (786 aa).

Residues Glu-103 and 235-239 (GAMEN) each bind substrate. His-270 contacts Zn(2+). The active-site Proton acceptor is the Glu-271. Zn(2+) is bound by residues His-274 and Glu-293.

The protein belongs to the peptidase M1 family. The cofactor is Zn(2+).

It localises to the cytoplasm. This chain is Probable aminopeptidase 1 (ape1), found in Sulfurisphaera tokodaii (strain DSM 16993 / JCM 10545 / NBRC 100140 / 7) (Sulfolobus tokodaii).